We begin with the raw amino-acid sequence, 206 residues long: Large ribosomal subunit protein uL4 (206 aa).

The tract at residues 47-75 (GTQSAKTRAEVSGGGIKPWRQKGTGRARQ) is disordered.

It belongs to the universal ribosomal protein uL4 family. In terms of assembly, part of the 50S ribosomal subunit.

One of the primary rRNA binding proteins, this protein initially binds near the 5'-end of the 23S rRNA. It is important during the early stages of 50S assembly. It makes multiple contacts with different domains of the 23S rRNA in the assembled 50S subunit and ribosome. Its function is as follows. Forms part of the polypeptide exit tunnel. The protein is Large ribosomal subunit protein uL4 of Clostridium botulinum (strain 657 / Type Ba4).